Consider the following 507-residue polypeptide: Maturase K (507 aa).

This sequence belongs to the intron maturase 2 family. MatK subfamily.

The protein resides in the plastid. It is found in the chloroplast. Functionally, usually encoded in the trnK tRNA gene intron. Probably assists in splicing its own and other chloroplast group II introns. The polypeptide is Maturase K (Liriodendron tulipifera (Tuliptree)).